The sequence spans 314 residues: MQIKLANPRGFCAGVDRAIEIVNRALDVFGPPIYVRHEVVHNKFVVDNLRQRGAIFVEELDQVPDNVIVIFSAHGVSQAVRKEAEGRGLKVFDATCPLVTKVHMEVVRYSRDGHECVLIGHEGHPEVEGTMGQYDASNGGAIYLVEDEADVAALEVRKPEALHYVTQTTLSMDDTSKVIDALRAKFPQIQGPRKNDICYATQNRQDAVKELADQCDMVLVVGSPNSSNSNRLRELAERMGTPAYLIDGAEDMQRGWFDGVRRIGITAGASAPEVLVRGVIAQLREWGASEEQELEGREENITFSMPKELRVKAL.

Cys12 provides a ligand contact to [4Fe-4S] cluster. Positions 41 and 74 each coordinate (2E)-4-hydroxy-3-methylbut-2-enyl diphosphate. 2 residues coordinate dimethylallyl diphosphate: His41 and His74. The isopentenyl diphosphate site is built by His41 and His74. Cys96 lines the [4Fe-4S] cluster pocket. His124 is a binding site for (2E)-4-hydroxy-3-methylbut-2-enyl diphosphate. His124 contacts dimethylallyl diphosphate. His124 serves as a coordination point for isopentenyl diphosphate. The active-site Proton donor is the Glu126. Thr168 provides a ligand contact to (2E)-4-hydroxy-3-methylbut-2-enyl diphosphate. Cys198 is a binding site for [4Fe-4S] cluster. 4 residues coordinate (2E)-4-hydroxy-3-methylbut-2-enyl diphosphate: Ser226, Ser227, Asn228, and Ser270. Ser226, Ser227, Asn228, and Ser270 together coordinate dimethylallyl diphosphate. Positions 226, 227, 228, and 270 each coordinate isopentenyl diphosphate.

Belongs to the IspH family. [4Fe-4S] cluster is required as a cofactor.

The enzyme catalyses isopentenyl diphosphate + 2 oxidized [2Fe-2S]-[ferredoxin] + H2O = (2E)-4-hydroxy-3-methylbut-2-enyl diphosphate + 2 reduced [2Fe-2S]-[ferredoxin] + 2 H(+). It carries out the reaction dimethylallyl diphosphate + 2 oxidized [2Fe-2S]-[ferredoxin] + H2O = (2E)-4-hydroxy-3-methylbut-2-enyl diphosphate + 2 reduced [2Fe-2S]-[ferredoxin] + 2 H(+). Its pathway is isoprenoid biosynthesis; dimethylallyl diphosphate biosynthesis; dimethylallyl diphosphate from (2E)-4-hydroxy-3-methylbutenyl diphosphate: step 1/1. It functions in the pathway isoprenoid biosynthesis; isopentenyl diphosphate biosynthesis via DXP pathway; isopentenyl diphosphate from 1-deoxy-D-xylulose 5-phosphate: step 6/6. Its function is as follows. Catalyzes the conversion of 1-hydroxy-2-methyl-2-(E)-butenyl 4-diphosphate (HMBPP) into a mixture of isopentenyl diphosphate (IPP) and dimethylallyl diphosphate (DMAPP). Acts in the terminal step of the DOXP/MEP pathway for isoprenoid precursor biosynthesis. This Pseudomonas aeruginosa (strain LESB58) protein is 4-hydroxy-3-methylbut-2-enyl diphosphate reductase.